The following is a 623-amino-acid chain: Aspartate--tRNA(Asp/Asn) ligase (623 aa).

E175 serves as a coordination point for L-aspartate. The aspartate stretch occupies residues 199–202 (QQYK). Residues R221 and H483 each contribute to the L-aspartate site. 221 to 223 (RDE) is a binding site for ATP. E517 contributes to the ATP binding site. R524 serves as a coordination point for L-aspartate. Position 569–572 (569–572 (GVDR)) interacts with ATP.

It belongs to the class-II aminoacyl-tRNA synthetase family. Type 1 subfamily. Homodimer.

It localises to the cytoplasm. It catalyses the reaction tRNA(Asx) + L-aspartate + ATP = L-aspartyl-tRNA(Asx) + AMP + diphosphate. In terms of biological role, aspartyl-tRNA synthetase with relaxed tRNA specificity since it is able to aspartylate not only its cognate tRNA(Asp) but also tRNA(Asn). Reaction proceeds in two steps: L-aspartate is first activated by ATP to form Asp-AMP and then transferred to the acceptor end of tRNA(Asp/Asn). This is Aspartate--tRNA(Asp/Asn) ligase from Xanthobacter autotrophicus (strain ATCC BAA-1158 / Py2).